Consider the following 243-residue polypeptide: UDP-2,3-diacylglucosamine hydrolase (243 aa).

The Mn(2+) site is built by Asp8, His10, Asp41, Asn79, and His114. Residue 79 to 80 (NR) participates in substrate binding. 4 residues coordinate substrate: Asp122, Lys164, Lys167, and His195. Residues His195 and His197 each coordinate Mn(2+).

It belongs to the LpxH family. It depends on Mn(2+) as a cofactor.

The protein localises to the cell inner membrane. The catalysed reaction is UDP-2-N,3-O-bis[(3R)-3-hydroxytetradecanoyl]-alpha-D-glucosamine + H2O = 2-N,3-O-bis[(3R)-3-hydroxytetradecanoyl]-alpha-D-glucosaminyl 1-phosphate + UMP + 2 H(+). Its pathway is glycolipid biosynthesis; lipid IV(A) biosynthesis; lipid IV(A) from (3R)-3-hydroxytetradecanoyl-[acyl-carrier-protein] and UDP-N-acetyl-alpha-D-glucosamine: step 4/6. In terms of biological role, hydrolyzes the pyrophosphate bond of UDP-2,3-diacylglucosamine to yield 2,3-diacylglucosamine 1-phosphate (lipid X) and UMP by catalyzing the attack of water at the alpha-P atom. Involved in the biosynthesis of lipid A, a phosphorylated glycolipid that anchors the lipopolysaccharide to the outer membrane of the cell. This is UDP-2,3-diacylglucosamine hydrolase from Vibrio vulnificus (strain CMCP6).